We begin with the raw amino-acid sequence, 444 residues long: Tubulin beta-7 chain (444 aa).

Residues Gln-11, Glu-69, Ser-138, Gly-142, Thr-143, Gly-144, Asn-204, and Asn-226 each contribute to the GTP site. Glu-69 is a Mg(2+) binding site.

The protein belongs to the tubulin family. In terms of assembly, dimer of alpha and beta chains. A typical microtubule is a hollow water-filled tube with an outer diameter of 25 nm and an inner diameter of 15 nM. Alpha-beta heterodimers associate head-to-tail to form protofilaments running lengthwise along the microtubule wall with the beta-tubulin subunit facing the microtubule plus end conferring a structural polarity. Microtubules usually have 13 protofilaments but different protofilament numbers can be found in some organisms and specialized cells. Mg(2+) is required as a cofactor.

The protein localises to the cytoplasm. It is found in the cytoskeleton. Tubulin is the major constituent of microtubules, a cylinder consisting of laterally associated linear protofilaments composed of alpha- and beta-tubulin heterodimers. Microtubules grow by the addition of GTP-tubulin dimers to the microtubule end, where a stabilizing cap forms. Below the cap, tubulin dimers are in GDP-bound state, owing to GTPase activity of alpha-tubulin. The polypeptide is Tubulin beta-7 chain (Gossypium hirsutum (Upland cotton)).